A 420-amino-acid chain; its full sequence is Ribosome biogenesis protein WDR12 homolog (420 aa).

Residues 10 to 92 form a ubiquitin-like (UBL) domain region; sequence VQVHLKTKQE…EDAIEIEYVE (83 aa). WD repeat units lie at residues 104–142, 143–185, 192–231, 250–288, 290–329, 335–375, and 379–417; these read LHDD…LTIS, GHTA…NAVD, GHER…GVEG, GHRE…IKTE, STNK…GSVV, GHNA…APLY, and GHGD…AEDT.

It belongs to the WD repeat WDR12/YTM1 family.

It is found in the nucleus. The protein resides in the nucleolus. The protein localises to the nucleoplasm. Required for maturation of ribosomal RNAs and formation of the large ribosomal subunit. The sequence is that of Ribosome biogenesis protein WDR12 homolog from Drosophila simulans (Fruit fly).